A 244-amino-acid polypeptide reads, in one-letter code: Sugar fermentation stimulation protein homolog (244 aa).

It belongs to the SfsA family.

The polypeptide is Sugar fermentation stimulation protein homolog (Dinoroseobacter shibae (strain DSM 16493 / NCIMB 14021 / DFL 12)).